The sequence spans 90 residues: Guanine nucleotide-binding protein subunit gamma (90 aa).

Residue C86 is the site of S-palmitoyl cysteine attachment. The residue at position 87 (C87) is a Cysteine methyl ester. C87 carries the S-farnesyl cysteine lipid modification. Residues 88–90 (TIM) constitute a propeptide, removed in mature form.

This sequence belongs to the G protein gamma family. G proteins are composed of 3 units, alpha, beta and gamma.

Its subcellular location is the membrane. The polypeptide is Guanine nucleotide-binding protein subunit gamma (Kluyveromyces lactis (strain ATCC 8585 / CBS 2359 / DSM 70799 / NBRC 1267 / NRRL Y-1140 / WM37) (Yeast)).